Consider the following 472-residue polypeptide: Chromosomal replication initiator protein DnaA (472 aa).

Positions 1–73 (MSNMEQDRWS…LSCWQAELPE (73 aa)) are domain I, interacts with DnaA modulators. The interval 73-128 (EVNRVDLTVRSPVRCATPAKEVPAPVESRRDEQRPSAERSNGATPVSANHDALGGS) is domain II. The tract at residues 90 to 124 (PAKEVPAPVESRRDEQRPSAERSNGATPVSANHDA) is disordered. The segment covering 99–109 (ESRRDEQRPSA) has biased composition (basic and acidic residues). The span at 110–119 (ERSNGATPVS) shows a compositional bias: polar residues. Positions 129–351 (PLDPRLTFAS…GAINRLLAHS (223 aa)) are domain III, AAA+ region. The ATP site is built by G176, G178, K179, and T180. Residues 352-472 (KLNNQPVTLE…VESLKRQLQE (121 aa)) form a domain IV, binds dsDNA region.

The protein belongs to the DnaA family. Oligomerizes as a right-handed, spiral filament on DNA at oriC.

It is found in the cytoplasm. Functionally, plays an essential role in the initiation and regulation of chromosomal replication. ATP-DnaA binds to the origin of replication (oriC) to initiate formation of the DNA replication initiation complex once per cell cycle. Binds the DnaA box (a 9 base pair repeat at the origin) and separates the double-stranded (ds)DNA. Forms a right-handed helical filament on oriC DNA; dsDNA binds to the exterior of the filament while single-stranded (ss)DNA is stabiized in the filament's interior. The ATP-DnaA-oriC complex binds and stabilizes one strand of the AT-rich DNA unwinding element (DUE), permitting loading of DNA polymerase. After initiation quickly degrades to an ADP-DnaA complex that is not apt for DNA replication. Binds acidic phospholipids. This is Chromosomal replication initiator protein DnaA from Rhodopseudomonas palustris (strain ATCC BAA-98 / CGA009).